A 177-amino-acid chain; its full sequence is ATP-dependent protease subunit HslV (177 aa).

Threonine 4 is a catalytic residue. Serine 159, cysteine 162, and threonine 165 together coordinate Na(+).

This sequence belongs to the peptidase T1B family. HslV subfamily. A double ring-shaped homohexamer of HslV is capped on each side by a ring-shaped HslU homohexamer. The assembly of the HslU/HslV complex is dependent on binding of ATP.

It is found in the cytoplasm. It catalyses the reaction ATP-dependent cleavage of peptide bonds with broad specificity.. Allosterically activated by HslU binding. In terms of biological role, protease subunit of a proteasome-like degradation complex believed to be a general protein degrading machinery. This chain is ATP-dependent protease subunit HslV, found in Mesorhizobium japonicum (strain LMG 29417 / CECT 9101 / MAFF 303099) (Mesorhizobium loti (strain MAFF 303099)).